The sequence spans 326 residues: GTP cyclohydrolase MptA (326 aa).

Belongs to the GTP cyclohydrolase IV family. Homodimer. The cofactor is Fe(2+).

The enzyme catalyses GTP + H2O = 7,8-dihydroneopterin 2',3'-cyclic phosphate + formate + diphosphate + H(+). Its pathway is cofactor biosynthesis; 5,6,7,8-tetrahydromethanopterin biosynthesis. Its function is as follows. Converts GTP to 7,8-dihydro-D-neopterin 2',3'-cyclic phosphate, the first intermediate in the biosynthesis of coenzyme methanopterin. The polypeptide is GTP cyclohydrolase MptA (Methanoregula boonei (strain DSM 21154 / JCM 14090 / 6A8)).